The primary structure comprises 891 residues: Kinesin-like protein KIN-UB (891 aa).

Residues M1–R54 are disordered. Residues A45–R54 are compositionally biased toward low complexity. In terms of domain architecture, Kinesin motor spans R54–V400. Residue G139 to T146 participates in ATP binding. A D-BOX motif is present at residues R370 to G378. The stretch at T502 to R592 forms a coiled coil. Basic and acidic residues predominate over residues T586–G595. The interval T586–I626 is disordered. A compositionally biased stretch (polar residues) spans M607 to G621. ARM repeat units follow at residues K623 to A662, E664 to M704, E706 to G746, and D748 to K787.

The protein belongs to the TRAFAC class myosin-kinesin ATPase superfamily. Kinesin family. Ungrouped subfamily.

Its subcellular location is the cytoplasm. The protein resides in the cytoskeleton. This is Kinesin-like protein KIN-UB from Oryza sativa subsp. japonica (Rice).